The primary structure comprises 587 residues: Membrane protein insertase YidC (587 aa).

5 consecutive transmembrane segments (helical) span residues 5–25 (SVIG…FMKP), 365–385 (GLII…LSLA), 430–450 (LGGC…FYVF), 480–500 (LPLY…TVFF), and 516–536 (IMIW…PSGL).

It belongs to the OXA1/ALB3/YidC family. Type 1 subfamily. Interacts with the Sec translocase complex via SecD. Specifically interacts with transmembrane segments of nascent integral membrane proteins during membrane integration.

Its subcellular location is the cell inner membrane. In terms of biological role, required for the insertion and/or proper folding and/or complex formation of integral membrane proteins into the membrane. Involved in integration of membrane proteins that insert both dependently and independently of the Sec translocase complex, as well as at least some lipoproteins. Aids folding of multispanning membrane proteins. In Chlorobaculum parvum (strain DSM 263 / NCIMB 8327) (Chlorobium vibrioforme subsp. thiosulfatophilum), this protein is Membrane protein insertase YidC.